The chain runs to 224 residues: Thiamine-triphosphatase (224 aa).

A2 bears the N-acetylalanine mark. In terms of domain architecture, CYTH spans 5 to 201 (LIEVERKFTP…AKLLVYLQRF (197 aa)). Mg(2+) is bound by residues E7 and E9. Substrate-binding residues include K11, R55, R57, K65, and R125. 3 residues coordinate Mg(2+): D145, E157, and E159. E157 contacts substrate. Substrate is bound at residue K193.

This sequence belongs to the ThTPase family. In terms of assembly, monomer. Requires Mg(2+) as cofactor.

The protein resides in the cytoplasm. It catalyses the reaction thiamine triphosphate + H2O = thiamine diphosphate + phosphate + H(+). Functionally, hydrolase highly specific for thiamine triphosphate (ThTP). The chain is Thiamine-triphosphatase (Thtpa) from Rattus norvegicus (Rat).